Consider the following 296-residue polypeptide: uncharacterized protein (296 aa).

An N-terminal signal peptide occupies residues 1-20 (MRKFIFVLLTLLLVSPFSFA).

This is an uncharacterized protein from Escherichia coli (strain K12).